Here is a 301-residue protein sequence, read N- to C-terminus: Probable alpha-L-glutamate ligase (301 aa).

Residues 104-287 form the ATP-grasp domain; it reads LQLLSRKGIG…VAGMIYEFIE (184 aa). ATP is bound by residues K141, 178–179, D187, and 211–213; these read EF and RSN. 3 residues coordinate Mg(2+): D248, E260, and N262. Positions 248, 260, and 262 each coordinate Mn(2+).

This sequence belongs to the RimK family. It depends on Mg(2+) as a cofactor. The cofactor is Mn(2+).

This Vibrio vulnificus (strain CMCP6) protein is Probable alpha-L-glutamate ligase.